The sequence spans 114 residues: Large ribosomal subunit protein bL20c (114 aa).

This sequence belongs to the bacterial ribosomal protein bL20 family.

The protein localises to the plastid. It localises to the cyanelle. Functionally, binds directly to 23S ribosomal RNA and is necessary for the in vitro assembly process of the 50S ribosomal subunit. It is not involved in the protein synthesizing functions of that subunit. This Cyanophora paradoxa protein is Large ribosomal subunit protein bL20c (rpl20).